The chain runs to 279 residues: Tryptophan synthase alpha chain (279 aa).

Catalysis depends on proton acceptor residues E50 and D61.

The protein belongs to the TrpA family. In terms of assembly, tetramer of two alpha and two beta chains.

It catalyses the reaction (1S,2R)-1-C-(indol-3-yl)glycerol 3-phosphate + L-serine = D-glyceraldehyde 3-phosphate + L-tryptophan + H2O. Its pathway is amino-acid biosynthesis; L-tryptophan biosynthesis; L-tryptophan from chorismate: step 5/5. The alpha subunit is responsible for the aldol cleavage of indoleglycerol phosphate to indole and glyceraldehyde 3-phosphate. In Allorhizobium ampelinum (strain ATCC BAA-846 / DSM 112012 / S4) (Agrobacterium vitis (strain S4)), this protein is Tryptophan synthase alpha chain.